Reading from the N-terminus, the 949-residue chain is Sensor histidine kinase RcsC (949 aa).

Residues 1–19 (MKYLASFRTTLKASRYMFR) lie on the Cytoplasmic side of the membrane. A helical transmembrane segment spans residues 20 to 41 (ALALVLWLLIAFSSVFYIVNAL). Residues 42 to 313 (HQRESEIRQE…PVDKVLERIR (272 aa)) lie on the Periplasmic side of the membrane. A helical membrane pass occupies residues 314-335 (MLILNAILLNVLAGAALFTLAR). At 336–949 (MYERRIFIPA…AERVRKSRDS (614 aa)) the chain is on the cytoplasmic side. Residues 357–425 (QFNRKIVASA…VLTSNNTNLQ (69 aa)) form the PAS domain. The 217-residue stretch at 476–692 (TVSHELRTPL…QFTVRIPLYG (217 aa)) folds into the Histidine kinase domain. H479 carries the phosphohistidine; by autocatalysis modification. The ABL domain maps to 705-805 (SGKRCWLAVR…ARIYLIEMES (101 aa)). The Response regulatory domain occupies 826–940 (MILVVDDHPI…VIKQTLTLYA (115 aa)). D875 is subject to 4-aspartylphosphate.

The protein belongs to the RcsC family. In terms of assembly, interacts with RcsD. Post-translationally, autophosphorylated. Activation probably requires a transfer of a phosphate group from a His in the transmitter domain to an Asp in the receiver domain.

The protein localises to the cell inner membrane. It carries out the reaction ATP + protein L-histidine = ADP + protein N-phospho-L-histidine.. With respect to regulation, the Rcs phosphorelay may be activated by RcsF. DjlA, LolA and OmpG might act as a regulator of the phosphorelay. Activity is probably up-regulated by YmgA/AriR, and possibly down-regulated by YcgZ, all 3 are connector proteins providing additional signal input into signaling system. Component of the Rcs signaling system, which controls transcription of numerous genes. RcsC functions as a membrane-associated protein kinase that phosphorylates RcsD in response to environmental signals. The phosphoryl group is then transferred to the response regulator RcsB. RcsC also has phosphatase activity. The system controls expression of genes involved in colanic acid capsule synthesis, biofilm formation and cell division. The chain is Sensor histidine kinase RcsC from Escherichia coli (strain K12).